Here is a 345-residue protein sequence, read N- to C-terminus: N-acetyl-gamma-glutamyl-phosphate reductase (345 aa).

C149 is an active-site residue.

It belongs to the NAGSA dehydrogenase family. Type 1 subfamily.

It localises to the cytoplasm. It catalyses the reaction N-acetyl-L-glutamate 5-semialdehyde + phosphate + NADP(+) = N-acetyl-L-glutamyl 5-phosphate + NADPH + H(+). It participates in amino-acid biosynthesis; L-arginine biosynthesis; N(2)-acetyl-L-ornithine from L-glutamate: step 3/4. Functionally, catalyzes the NADPH-dependent reduction of N-acetyl-5-glutamyl phosphate to yield N-acetyl-L-glutamate 5-semialdehyde. This Halalkalibacterium halodurans (strain ATCC BAA-125 / DSM 18197 / FERM 7344 / JCM 9153 / C-125) (Bacillus halodurans) protein is N-acetyl-gamma-glutamyl-phosphate reductase.